We begin with the raw amino-acid sequence, 407 residues long: PWWP domain-containing protein 3 (407 aa).

The segment at 1-46 (MMVARTRSQKRKLEEINNQKKIKTKKKATGQQTSNTKNLRDVKKKG) is disordered. One can recognise a PWWP domain in the interval 63 to 129 (NGEYVLAKMS…SSNVLPLTVD (67 aa)). A phosphoserine mark is found at serine 160 and serine 162. The segment at 163–248 (DVEEDEFEPE…PIPSPKKTAK (86 aa)) is disordered. Positions 172–208 (ENTRKKLQKPIEKPKKEKIEATPKIDGGKRLKNEKSS) are enriched in basic and acidic residues. Serine 236, serine 238, and serine 242 each carry phosphoserine.

As to quaternary structure, component of the mst2 complex composed of at least eaf6, mst2, nto1, pdp3, ptf1, ptf2 and tfg3.

The protein resides in the nucleus. Its function is as follows. Component of the mst2 complex which is a highly specific H3 lysine 14 (H3K14) acetyltransferase that functions together with gcn5 to regulate global levels of H3K14 acetylation (H3K14ac), critical for DNA damage checkpoint activation. The sequence is that of PWWP domain-containing protein 3 (pdp3) from Schizosaccharomyces pombe (strain 972 / ATCC 24843) (Fission yeast).